The sequence spans 66 residues: MAKGKDIRIIVILECTCCVRKGVNKELLGISRYITQKNRHNTPNRLEFRKFCRYCQKYTIHGEIKK.

The protein belongs to the bacterial ribosomal protein bL33 family.

The protein resides in the plastid. The protein localises to the chloroplast. In Phalaenopsis aphrodite subsp. formosana (Moth orchid), this protein is Large ribosomal subunit protein bL33c.